A 520-amino-acid polypeptide reads, in one-letter code: Tubby-related protein 2 (520 aa).

Phosphoserine occurs at positions 135 and 190. Residues 141–236 (EVSVENGSVS…GTNSSAAHNE (96 aa)) are disordered. Positions 211 to 223 (QKEEDLEKKREAS) are enriched in basic and acidic residues. Residues 224 to 233 (ESTGTNSSAA) show a composition bias toward polar residues.

Belongs to the TUB family. In terms of tissue distribution, strongly expressed in testis. Also expressed in retina. Expressed in cancer cell lines.

It is found in the cytoplasm. The protein resides in the secreted. The protein is Tubby-related protein 2 (TULP2) of Homo sapiens (Human).